A 103-amino-acid polypeptide reads, in one-letter code: MYAVIKTGGKQYKVAAGEKIKVEQIAADVGQEIVIDQVLAVGEGSAIKVGTPLVSGATVTVTVLSHGRHDKVRIFKMRRRKHYQKRQGHRQNFTELQIGAIVG.

This sequence belongs to the bacterial ribosomal protein bL21 family. As to quaternary structure, part of the 50S ribosomal subunit. Contacts protein L20.

In terms of biological role, this protein binds to 23S rRNA in the presence of protein L20. The sequence is that of Large ribosomal subunit protein bL21 from Polaromonas sp. (strain JS666 / ATCC BAA-500).